The following is a 180-amino-acid chain: Nucleoside triphosphate/diphosphate phosphatase (180 aa).

Residue R26 is the Proton donor of the active site. Mg(2+) contacts are provided by N90, D106, D108, D110, D123, and E126.

The protein belongs to the Ntdp family. It depends on Mg(2+) as a cofactor.

The enzyme catalyses a ribonucleoside 5'-triphosphate + H2O = a ribonucleoside 5'-diphosphate + phosphate + H(+). The catalysed reaction is a ribonucleoside 5'-diphosphate + H2O = a ribonucleoside 5'-phosphate + phosphate + H(+). Functionally, has nucleoside phosphatase activity towards nucleoside triphosphates and nucleoside diphosphates. The polypeptide is Nucleoside triphosphate/diphosphate phosphatase (Staphylococcus haemolyticus (strain JCSC1435)).